A 429-amino-acid chain; its full sequence is Serine--tRNA ligase (429 aa).

235 to 237 (TAE) is an L-serine binding site. Residue 266–268 (RSE) coordinates ATP. Glutamate 289 provides a ligand contact to L-serine. 353 to 356 (EISS) serves as a coordination point for ATP. An L-serine-binding site is contributed by serine 389.

This sequence belongs to the class-II aminoacyl-tRNA synthetase family. Type-1 seryl-tRNA synthetase subfamily. In terms of assembly, homodimer. The tRNA molecule binds across the dimer.

It is found in the cytoplasm. The enzyme catalyses tRNA(Ser) + L-serine + ATP = L-seryl-tRNA(Ser) + AMP + diphosphate + H(+). It catalyses the reaction tRNA(Sec) + L-serine + ATP = L-seryl-tRNA(Sec) + AMP + diphosphate + H(+). It participates in aminoacyl-tRNA biosynthesis; selenocysteinyl-tRNA(Sec) biosynthesis; L-seryl-tRNA(Sec) from L-serine and tRNA(Sec): step 1/1. Functionally, catalyzes the attachment of serine to tRNA(Ser). Is also able to aminoacylate tRNA(Sec) with serine, to form the misacylated tRNA L-seryl-tRNA(Sec), which will be further converted into selenocysteinyl-tRNA(Sec). This is Serine--tRNA ligase from Histophilus somni (strain 129Pt) (Haemophilus somnus).